The sequence spans 152 residues: Small ribosomal subunit protein uS9 (152 aa).

Belongs to the universal ribosomal protein uS9 family.

This is Small ribosomal subunit protein uS9 from Mycobacterium ulcerans (strain Agy99).